Reading from the N-terminus, the 521-residue chain is Maturase K (521 aa).

It belongs to the intron maturase 2 family. MatK subfamily.

Its subcellular location is the plastid. In terms of biological role, usually encoded in the trnK tRNA gene intron. Probably assists in splicing its own and other chloroplast group II introns. The polypeptide is Maturase K (Cuscuta exaltata (Tall dodder)).